The chain runs to 426 residues: Glucose-6-phosphate isomerase (426 aa).

Glutamate 282 (proton donor) is an active-site residue. Catalysis depends on residues histidine 303 and lysine 417.

It belongs to the GPI family.

Its subcellular location is the cytoplasm. It carries out the reaction alpha-D-glucose 6-phosphate = beta-D-fructose 6-phosphate. It functions in the pathway carbohydrate biosynthesis; gluconeogenesis. Its pathway is carbohydrate degradation; glycolysis; D-glyceraldehyde 3-phosphate and glycerone phosphate from D-glucose: step 2/4. Its function is as follows. Catalyzes the reversible isomerization of glucose-6-phosphate to fructose-6-phosphate. The chain is Glucose-6-phosphate isomerase from Aster yellows witches'-broom phytoplasma (strain AYWB).